A 241-amino-acid chain; its full sequence is MQSKRSRVLVKFSGEALAGENGFGIDTKILGFIASEIRSLVENKIEVGIVIGGGNIIRGVSAAQDGVIRRTSADYMGMLATVINAVAMQEALEHAGLDVRVQSAIELKEICESYIYRRAIRHLEKGRVVIFGAGTGNPFFTTDTAATLRAIEIGANMIIKATKVDGVYDKDPNKFSDAKKLDTLSYEEALDDRIKVMDDTAIALAKDNRLPIVVCNMFKPGNLLKIIQGDNGLCSVVGQRQ.

11 to 14 contacts ATP; it reads KFSG. The involved in allosteric activation by GTP stretch occupies residues 19–24; sequence GENGFG. Gly53 provides a ligand contact to UMP. The ATP site is built by Gly54 and Arg58. Residues Asp74 and 135-142 each bind UMP; that span reads TGNPFFTT. Residues Thr162, Tyr168, and Asp171 each coordinate ATP.

Belongs to the UMP kinase family. Homohexamer.

The protein localises to the cytoplasm. It catalyses the reaction UMP + ATP = UDP + ADP. The protein operates within pyrimidine metabolism; CTP biosynthesis via de novo pathway; UDP from UMP (UMPK route): step 1/1. Allosterically activated by GTP. Inhibited by UTP. Functionally, catalyzes the reversible phosphorylation of UMP to UDP. This is Uridylate kinase from Wolinella succinogenes (strain ATCC 29543 / DSM 1740 / CCUG 13145 / JCM 31913 / LMG 7466 / NCTC 11488 / FDC 602W) (Vibrio succinogenes).